The following is a 1104-amino-acid chain: Reverse gyrase (1104 aa).

The RG N-terminal-type zinc-finger motif lies at 1-39; that stretch reads MAVNSKYHHSCINCGGLNTDERNERGLPCEVCLPEDSPS. 4 residues coordinate Zn(2+): Cys-11, Cys-14, Cys-29, and Cys-32. Residues Phe-75, Asp-78, Gln-83, Gly-103, Gly-105, Lys-106, Thr-107, and Thr-108 each coordinate ADP. Residues Gln-83 and 100–107 contribute to the ATP site; that span reads APTGVGKT. Positions 87–242 constitute a Helicase ATP-binding domain; it reads AKRIVQGKSF…FSTIKQGKIY (156 aa). A DEAD box motif is present at residues 203 to 206; the sequence is DDVD. The insert region stretch occupies residues 223–250; sequence GIPEEIIRKAFSTIKQGKIYERPKNLKP. In terms of domain architecture, Helicase C-terminal spans 300 to 522; the sequence is KLVELLEIFR…EAEANWKELV (223 aa). Residues 390-460 form a latch region region; sequence RFSLELDKAP…KDEDLELIIP (71 aa). Positions 538–1104 are topoisomerase I; that stretch reads DTSRSLLIIV…EEIKSLMEEG (567 aa). In terms of domain architecture, Toprim spans 542-699; that stretch reads SLLIIVESPT…SLRRIEMHEI (158 aa). Glu-548 is a binding site for Mg(2+). The RG C-terminal-type zinc finger occupies 618–645; sequence LKRCRDCGYQFTEDRDECPVCSSKNIDD. Zn(2+) is bound by residues Cys-621, Cys-624, Cys-635, and Cys-638. Asp-668 contacts Mg(2+). One can recognise a Topo IA-type catalytic domain in the interval 715–1101; the sequence is DFNLVKAQIV…LLYEEIKSLM (387 aa). Catalysis depends on Tyr-851, which acts as the O-(5'-phospho-DNA)-tyrosine intermediate.

The protein in the N-terminal section; belongs to the DEAD box helicase family. DDVD subfamily. In the C-terminal section; belongs to the type IA topoisomerase family. As to quaternary structure, monomer. Zn(2+) serves as cofactor. Mg(2+) is required as a cofactor.

It is found in the cytoplasm. The catalysed reaction is ATP + H2O = ADP + phosphate + H(+). Modifies the topological state of DNA by introducing positive supercoils in an ATP-dependent process. Increases the linking number in steps of +1. Probably recognizes regions with a low GC content which melt and form a ssDNA bubble, allowing the enzyme to bind and cleave the DNA prior to strand passage; the bubble is probably cleaved by 2 reverse gyrase molecules, one on each strand. Positively supercoils DNA with all NTPS, although it strongly prefers ATP. In the presence of non-hydrolyzable ATP analogs it partially relaxes negative supercoils. Has an intrinsic ATPase activity that is stimulated by DNA; ssDNA is most effective. Binds to single-stranded DNA, transiently cleaves and then rejoins the ends, introducing a positive supercoil in the process. The scissile phosphodiester is attacked by the catalytic tyrosine of the enzyme, resulting in the formation of a DNA-(5'-phosphotyrosyl)-enzyme intermediate. The helicase-like domain is a nucleotide-dependent switch that alternates between a physically closed ATP-bound state with a slight preference for dsDNA, and an open ADP-bound state with a high preference for ssDNA. Whole enzyme has a very poor (k-unwind=0.001 sec(-1)) non-processive helicase activity in the 3'-5' direction that works on short substrates, while the isolated helicase domain has a slightly better helicase activity that works in both directions. Probably involved in rewinding DNA strands in regions of the chromosome that have opened up to allow replication, transcription, DNA repair and/or for DNA protection. The polypeptide is Reverse gyrase (Thermotoga maritima (strain ATCC 43589 / DSM 3109 / JCM 10099 / NBRC 100826 / MSB8)).